The primary structure comprises 207 residues: Small ribosomal subunit protein uS4 (207 aa).

The region spanning 96–159 (RRLDNVVYRL…RASTFIADNI (64 aa)) is the S4 RNA-binding domain.

This sequence belongs to the universal ribosomal protein uS4 family. In terms of assembly, part of the 30S ribosomal subunit. Contacts protein S5. The interaction surface between S4 and S5 is involved in control of translational fidelity.

One of the primary rRNA binding proteins, it binds directly to 16S rRNA where it nucleates assembly of the body of the 30S subunit. In terms of biological role, with S5 and S12 plays an important role in translational accuracy. The chain is Small ribosomal subunit protein uS4 from Leptospira borgpetersenii serovar Hardjo-bovis (strain JB197).